Reading from the N-terminus, the 115-residue chain is Large ribosomal subunit protein bL20 (115 aa).

The protein belongs to the bacterial ribosomal protein bL20 family.

Functionally, binds directly to 23S ribosomal RNA and is necessary for the in vitro assembly process of the 50S ribosomal subunit. It is not involved in the protein synthesizing functions of that subunit. The protein is Large ribosomal subunit protein bL20 of Chlorobaculum parvum (strain DSM 263 / NCIMB 8327) (Chlorobium vibrioforme subsp. thiosulfatophilum).